Consider the following 699-residue polypeptide: Polyribonucleotide nucleotidyltransferase (699 aa).

Mg(2+) contacts are provided by D485 and D491. The 60-residue stretch at 552 to 611 folds into the KH domain; the sequence is PRITTIKINPEKIRDVIGKGGAVIRALTEETGTTIELEDDGTVKIASSNGDATREAIRRI. In terms of domain architecture, S1 motif spans 621-689; it reads GRIYNGKVIR…RQGRVRLSIK (69 aa).

It belongs to the polyribonucleotide nucleotidyltransferase family. In terms of assembly, component of the RNA degradosome, which is a multiprotein complex involved in RNA processing and mRNA degradation. The cofactor is Mg(2+).

The protein localises to the cytoplasm. It catalyses the reaction RNA(n+1) + phosphate = RNA(n) + a ribonucleoside 5'-diphosphate. Its function is as follows. Involved in mRNA degradation. Catalyzes the phosphorolysis of single-stranded polyribonucleotides processively in the 3'- to 5'-direction. In Shewanella sp. (strain ANA-3), this protein is Polyribonucleotide nucleotidyltransferase.